A 910-amino-acid polypeptide reads, in one-letter code: MEGGGKPNSASNSRDDGNSVFPSKAPATGPVAADKRLGTPPGGGAAGKEHGNSVCFKVDGGGGEEPAGSFEDAEGPRRQYGFMQRQFTSMLQPGVNKFSLRMFGSQKAVEKEQERVKTAGFWIIHPYSDFRFYWDLIMLIMMVGNLVIIPVGITFFTEQTTTPWIIFNVASDTVFLLDLIMNFRTGTVNEDSSEIILDPKVIKMNYLKSWFVVDFISSIPVDYIFLIVEKGMDSEVYKTARALRIVRFTKILSLLRLLRLSRLIRYIHQWEEIFHMTYDLASAVVRIFNLIGMMLLLCHWDGCLQFLVPLLQDFPPDCWVSLNEMVNDSWGKQYSYALFKAMSHMLCIGYGAQAPVSMSDLWITMLSMIVGATCYAMFVGHATALIQSLDSSRRQYQEKYKQVEQYMSFHKLPADMRQKIHDYYEHRYQGKIFDEENILSELNDPLREEIVNFNCRKLVATMPLFANADPNFVTAMLSKLRFEVFQPGDYIIREGAVGKKMYFIQHGVAGVITKSSKEMKLTDGSYFGEICLLTKGRRTASVRADTYCRLYSLSVDNFNEVLEEYPMMRRAFETVAIDRLDRIGKKNSILLQKFQKDLNTGVFNNQENEILKQIVKHDREMVQAIPPINYPQMTALNCTSSTTTPTSRMRTQSPPVYTATSLSHSNLHSPSPSTQTPQPSAILSPCSYTTAVCSPPIQSPLATRTFHYASPTASQLSLMQQPQQQLPQSQVQQTQTQTQQQQQQQQQQQQQQQQQQQQQQQQQQQQQQQQQQQQQPQTPGSSTPKNEVHKSTQALHNTNLTKEVRPLSASQPSLPHEVSTLISRPHPTVGESLASIPQPVAAVHSTGLQAGSRSTVPQRVTLFRQMSSGAIPPNRGVPPAPPPPAAVQRESPSVLNTDPDAEKPRFASNL.

Residues 1–75 are disordered; that stretch reads MEGGGKPNSA…PAGSFEDAEG (75 aa). Topologically, residues 1–131 are cytoplasmic; sequence MEGGGKPNSA…WIIHPYSDFR (131 aa). Residues 132-153 traverse the membrane as a helical segment; that stretch reads FYWDLIMLIMMVGNLVIIPVGI. Residues 154-162 are Extracellular-facing; that stretch reads TFFTEQTTT. Residues 163–183 form a helical membrane-spanning segment; the sequence is PWIIFNVASDTVFLLDLIMNF. Topologically, residues 184–204 are cytoplasmic; it reads RTGTVNEDSSEIILDPKVIKM. Residues 205–225 form a helical membrane-spanning segment; it reads NYLKSWFVVDFISSIPVDYIF. Topologically, residues 226–249 are extracellular; that stretch reads LIVEKGMDSEVYKTARALRIVRFT. A helical; Voltage-sensor transmembrane segment spans residues 250–270; it reads KILSLLRLLRLSRLIRYIHQW. Topologically, residues 271–284 are cytoplasmic; sequence EEIFHMTYDLASAV. The chain crosses the membrane as a helical span at residues 285–307; sequence VRIFNLIGMMLLLCHWDGCLQFL. Topologically, residues 308–333 are extracellular; the sequence is VPLLQDFPPDCWVSLNEMVNDSWGKQ. A glycan (N-linked (GlcNAc...) asparagine) is linked at N327. Positions 334–355 form an intramembrane region, pore-forming; the sequence is YSYALFKAMSHMLCIGYGAQAP. Positions 347-351 match the Selectivity filter motif; the sequence is CIGYG. The Extracellular portion of the chain corresponds to 356 to 360; it reads VSMSD. Residues 361 to 381 form a helical membrane-spanning segment; the sequence is LWITMLSMIVGATCYAMFVGH. Residues 382–910 lie on the Cytoplasmic side of the membrane; the sequence is ATALIQSLDS…AEKPRFASNL (529 aa). G528, E529, C531, R538, T539, R579, and R582 together coordinate 3',5'-cyclic AMP. Disordered regions lie at residues 634 to 681, 771 to 791, and 865 to 910; these read TALN…QPSA, QQQQ…VHKS, and QMSS…ASNL. A compositionally biased stretch (low complexity) spans 639 to 680; the sequence is TSSTTTPTSRMRTQSPPVYTATSLSHSNLHSPSPSTQTPQPS. Residues 780 to 791 show a composition bias toward polar residues; it reads GSSTPKNEVHKS. Residues 875–885 are compositionally biased toward pro residues; sequence RGVPPAPPPPA. The segment covering 900–910 has biased composition (basic and acidic residues); it reads DAEKPRFASNL.

The protein belongs to the potassium channel HCN family. In terms of assembly, homotetramer. Heterotetramer with HCN2. The potassium channel is composed of a homo- or heterotetrameric complex of pore-forming subunits. Interacts with KCNE2. Interacts with the SH3 domain of CSK. Post-translationally, N-glycosylated. In terms of tissue distribution, predominantly expressed in brain. Highly expressed in apical dendrites of pyramidal neurons in the cortex, in the layer corresponding to the stratum lacunosum-moleculare in the hippocampus and in axons of basket cells in the cerebellum (at protein level). Expressed in a subset of elongated cells in taste buds.

Its subcellular location is the cell membrane. The catalysed reaction is Na(+)(in) = Na(+)(out). It carries out the reaction K(+)(in) = K(+)(out). With respect to regulation, activated by cAMP. cAMP binding causes a conformation change that leads to the assembly of an active tetramer and channel opening. Compared to other family members, cAMP has less stimulatory effect on HCN1 because part of the molecules already contain bound cAMP and form homotetramers when cAMP levels are low, this inherent tetramerization in HCN1 results in a weaker response to increased cAMP. Hyperpolarization-activated ion channel that are permeable to sodium and potassium ions. Exhibits weak selectivity for potassium over sodium ions. Contributes to the native pacemaker currents in heart (If) and in neurons (Ih). Participates in cerebellar mechanisms of motor learning. May mediate responses to sour stimuli. This is Potassium/sodium hyperpolarization-activated cyclic nucleotide-gated channel 1 (Hcn1) from Mus musculus (Mouse).